Consider the following 147-residue polypeptide: Interleukin-4 (147 aa).

An N-terminal signal peptide occupies residues 1–24 (MGLSPHLAVTLFCFLICTGNGIHG). An intrachain disulfide couples Cys47 to Cys87. Residues Asn61, Asn90, and Asn117 are each glycosylated (N-linked (GlcNAc...) asparagine).

This sequence belongs to the IL-4/IL-13 family.

Its subcellular location is the secreted. In terms of biological role, participates in at least several B-cell activation processes as well as of other cell types. It is a costimulator of DNA-synthesis. It induces the expression of class II MHC molecules on resting B-cells. It enhances both secretion and cell surface expression of IgE and IgG1. It also regulates the expression of the low affinity Fc receptor for IgE (CD23) on both lymphocytes and monocytes. Positively regulates IL31RA expression in macrophages. Stimulates autophagy in dendritic cells by interfering with mTORC1 signaling and through the induction of RUFY4. This is Interleukin-4 (Il4) from Rattus norvegicus (Rat).